A 682-amino-acid polypeptide reads, in one-letter code: Glucan endo-1,3-beta-glucosidase A1 (682 aa).

The first 38 residues, 1–38, serve as a signal peptide directing secretion; the sequence is MKPSHFTEKRFMKKVLGLFLVVVMLASVGVLPTSKVQA. Positions 391–682 constitute a GH16 domain; the sequence is YTFIGNPNAP…VDYVRVYKEQ (292 aa). The active-site Nucleophile is the glutamate 552. Catalysis depends on glutamate 557, which acts as the Proton donor.

The protein belongs to the glycosyl hydrolase 16 family.

It is found in the secreted. The enzyme catalyses Hydrolysis of (1-&gt;3)-beta-D-glucosidic linkages in (1-&gt;3)-beta-D-glucans.. In terms of biological role, lysis of cellular walls containing beta-1,3-glucans. Implicated in the defense against fungal pathogens. This chain is Glucan endo-1,3-beta-glucosidase A1 (glcA), found in Niallia circulans (Bacillus circulans).